The following is a 370-amino-acid chain: Phosphoserine aminotransferase (370 aa).

M1 is subject to N-acetylmethionine. Residues H44 and R45 each coordinate O-phospho-L-serine. Position 51 is an N6-acetyllysine (K51). Pyridoxal 5'-phosphate is bound by residues G79 and W107. Residue K127 is modified to N6-acetyllysine. Residues T156, D176, and Q199 each contribute to the pyridoxal 5'-phosphate site. Position 200 is an N6-(pyridoxal phosphate)lysine (K200). 2 residues coordinate pyridoxal 5'-phosphate: N241 and T242. N6-acetyllysine occurs at positions 269, 318, and 323. S331 is modified (phosphoserine). K333 bears the N6-acetyllysine mark. Positions 335, 336, and 342 each coordinate O-phospho-L-serine.

It belongs to the class-V pyridoxal-phosphate-dependent aminotransferase family. SerC subfamily. In terms of assembly, homodimer. Requires pyridoxal 5'-phosphate as cofactor.

It carries out the reaction O-phospho-L-serine + 2-oxoglutarate = 3-phosphooxypyruvate + L-glutamate. Its pathway is amino-acid biosynthesis; L-serine biosynthesis; L-serine from 3-phospho-D-glycerate: step 2/3. Functionally, involved in L-serine biosynthesis via the phosphorylated pathway, a three-step pathway converting the glycolytic intermediate 3-phospho-D-glycerate into L-serine. Catalyzes the second step, that is the pyridoxal 5'-phosphate-dependent transamination of 3-phosphohydroxypyruvate and L-glutamate to O-phosphoserine (OPS) and alpha-ketoglutarate. This chain is Phosphoserine aminotransferase, found in Mus musculus (Mouse).